Here is a 27-residue protein sequence, read N- to C-terminus: Small integral membrane protein 43 (27 aa).

The important for interaction with SLC2A1 and SLC2A3 stretch occupies residues 15–21 (HREPWGF).

Interacts with glucose transporters SLC2A1/GLUT1 and SLC2A3/GLUT3; the interactions may promote SLC2A1- and SLC2A3-mediated glucose transport to meet the energy needs of mesendoderm differentiation.

It is found in the cell membrane. Functionally, required for mesendoderm differentiation. Interacts with glucose transporters and promotes glucose uptake. Probably augments the glucose uptake capacity of glucose transporter proteins to meet the energy needs of mesendoderm differentiation. The protein is Small integral membrane protein 43 of Pongo abelii (Sumatran orangutan).